Reading from the N-terminus, the 157-residue chain is Crossover junction endodeoxyribonuclease RuvC (157 aa).

Residues Asp7, Glu66, and Asp139 contribute to the active site. 3 residues coordinate Mg(2+): Asp7, Glu66, and Asp139.

This sequence belongs to the RuvC family. Homodimer which binds Holliday junction (HJ) DNA. The HJ becomes 2-fold symmetrical on binding to RuvC with unstacked arms; it has a different conformation from HJ DNA in complex with RuvA. In the full resolvosome a probable DNA-RuvA(4)-RuvB(12)-RuvC(2) complex forms which resolves the HJ. It depends on Mg(2+) as a cofactor.

It is found in the cytoplasm. It carries out the reaction Endonucleolytic cleavage at a junction such as a reciprocal single-stranded crossover between two homologous DNA duplexes (Holliday junction).. The RuvA-RuvB-RuvC complex processes Holliday junction (HJ) DNA during genetic recombination and DNA repair. Endonuclease that resolves HJ intermediates. Cleaves cruciform DNA by making single-stranded nicks across the HJ at symmetrical positions within the homologous arms, yielding a 5'-phosphate and a 3'-hydroxyl group; requires a central core of homology in the junction. The consensus cleavage sequence is 5'-(A/T)TT(C/G)-3'. Cleavage occurs on the 3'-side of the TT dinucleotide at the point of strand exchange. HJ branch migration catalyzed by RuvA-RuvB allows RuvC to scan DNA until it finds its consensus sequence, where it cleaves and resolves the cruciform DNA. This chain is Crossover junction endodeoxyribonuclease RuvC, found in Helicobacter pylori (strain ATCC 700392 / 26695) (Campylobacter pylori).